The sequence spans 292 residues: N-acetylneuraminate lyase (292 aa).

2 residues coordinate aceneuramate: Ser47 and Thr48. Tyr136 (proton donor) is an active-site residue. The active-site Schiff-base intermediate with substrate is the Lys164. The aceneuramate site is built by Thr166, Gly188, Asp190, Glu191, and Ser207.

The protein belongs to the DapA family. NanA subfamily. In terms of assembly, homotetramer.

The protein localises to the cytoplasm. The catalysed reaction is aceneuramate = aldehydo-N-acetyl-D-mannosamine + pyruvate. It participates in amino-sugar metabolism; N-acetylneuraminate degradation; D-fructose 6-phosphate from N-acetylneuraminate: step 1/5. In terms of biological role, catalyzes the reversible aldol cleavage of N-acetylneuraminic acid (sialic acid; Neu5Ac) to form pyruvate and N-acetylmannosamine (ManNAc) via a Schiff base intermediate. The protein is N-acetylneuraminate lyase of Actinobacillus pleuropneumoniae serotype 5b (strain L20).